The chain runs to 428 residues: GTPase Obg (428 aa).

Positions Met-1–Leu-158 constitute an Obg domain. Residues Ala-159–Glu-329 enclose the OBG-type G domain. GTP is bound by residues Gly-165–Ser-172, Phe-190–Val-194, Asp-212–Gly-215, Asn-282–Asp-285, and Ser-310–Val-312. Residues Ser-172 and Thr-192 each contribute to the Mg(2+) site. The OCT domain occupies Lys-350–Asp-428.

The protein belongs to the TRAFAC class OBG-HflX-like GTPase superfamily. OBG GTPase family. Monomer. The cofactor is Mg(2+).

It localises to the cytoplasm. Its function is as follows. An essential GTPase which binds GTP, GDP and possibly (p)ppGpp with moderate affinity, with high nucleotide exchange rates and a fairly low GTP hydrolysis rate. Plays a role in control of the cell cycle, stress response, ribosome biogenesis and in those bacteria that undergo differentiation, in morphogenesis control. The polypeptide is GTPase Obg (Bacillus thuringiensis (strain Al Hakam)).